The chain runs to 348 residues: tRNA pseudouridine synthase B (348 aa).

Catalysis depends on D52, which acts as the Nucleophile.

Belongs to the pseudouridine synthase TruB family. Type 1 subfamily.

The catalysed reaction is uridine(55) in tRNA = pseudouridine(55) in tRNA. Functionally, responsible for synthesis of pseudouridine from uracil-55 in the psi GC loop of transfer RNAs. The protein is tRNA pseudouridine synthase B of Rhodopirellula baltica (strain DSM 10527 / NCIMB 13988 / SH1).